Here is a 438-residue protein sequence, read N- to C-terminus: GTPase Der (438 aa).

EngA-type G domains lie at 4–168 (PIVA…KNEG) and 177–352 (IKIA…DNYC). GTP-binding positions include 10–17 (GRPNVGKS), 57–61 (DTGGI), 120–123 (NKID), 183–190 (GKPNVGKS), 230–234 (DTAGV), and 295–298 (NKWD). The 85-residue stretch at 353-437 (KQIKTGILND…GIKLEFRERK (85 aa)) folds into the KH-like domain.

It belongs to the TRAFAC class TrmE-Era-EngA-EngB-Septin-like GTPase superfamily. EngA (Der) GTPase family. Associates with the 50S ribosomal subunit.

In terms of biological role, GTPase that plays an essential role in the late steps of ribosome biogenesis. This chain is GTPase Der, found in Clostridium kluyveri (strain NBRC 12016).